A 494-amino-acid chain; its full sequence is WD repeat-containing protein 37 (494 aa).

2 stretches are compositionally biased toward polar residues: residues 1-13 (MPTESASCSTARQ) and 22-31 (SLSIRRTNSS). Residues 1 to 50 (MPTESASCSTARQTKQKRKSHSLSIRRTNSSEQERTGLPRDMLEGQDSKL) are disordered. Residues 32 to 47 (EQERTGLPRDMLEGQD) show a composition bias toward basic and acidic residues. 2 WD repeats span residues 154–194 (GHRD…CLVK) and 197–236 (GHVGSVNSIKFHPSEQLALTASGDQTAHIWRYAVQLPTPQ). Residues 237–265 (PVADTSISGEDEVECSDKDEPDLDGDVSS) form a disordered region. Residues 245 to 263 (GEDEVECSDKDEPDLDGDV) are compositionally biased toward acidic residues. WD repeat units follow at residues 279-318 (SHQGVVIASDWLVGGKQAVTASWDRTANLYDVETSELVHS), 321-360 (GHDQELTHCCTHPTQRLVVTSSRDTTFRLWDFRDPSIHSV), 365-403 (GHTDTVTSAVFTVGDNVVSGSDDRTVKVWDLKNMRSPIA), 406-445 (RTDSAINRINVCVGQKIIALPHDNRQVRLFDMSGVRLARL), and 452-493 (GHRR…LLQE).

Forms homodimers. Interacts with PACS1. Interacts with PACS2.

The protein resides in the cytoplasm. The protein localises to the nucleus. In terms of biological role, required for normal ER Ca2+ handling in lymphocytes. Together with PACS1, it plays an essential role in stabilizing peripheral lymphocyte populations. The polypeptide is WD repeat-containing protein 37 (WDR37) (Homo sapiens (Human)).